A 396-amino-acid chain; its full sequence is MRIILFSGKGGVGKTTISAATGYKLSQLGKKVIVVSLDPAHSLADSFDVPEEERRKAKGLPIKINENLEIQEIDIQEEIERYWGEVYRFIELLFHTTGLHEILADELAILPGMEEITSLLYVNKYYREGNHDVLILDLPPTGESIRFVSMPTVMKWYMKKIFKTERLIMKVARPTVGRMTDVPLPDEEYFKALETFYERLKGVDEILINPDITSIRIVSNPEKMVLKESQRAFLYFLLFGVNVDAVIVNKVIPEEVIQQENCSFLEKWLNIQKKYVKEIESYFSPVPVFKVPLLEEEVVGLERLEKLAQLIYGDEPPDKIFHKEIPYKIEQLDGKYVIRIKAPGVKKESISLVKGEDEIVVRVGNFKAHVMLPRKLRNLEPERAKVEKDEILIFMS.

8 to 15 contacts ATP; it reads GKGGVGKT.

Belongs to the arsA ATPase family.

The enzyme catalyses arsenite(in) + ATP + H2O = arsenite(out) + ADP + phosphate + H(+). Functionally, anion-transporting ATPase. Catalyzes the extrusion of arsenite. The protein is Putative arsenical pump-driving ATPase 1 (arsA1) of Aquifex aeolicus (strain VF5).